The following is an 865-amino-acid chain: Protein translocase subunit SecA (865 aa).

ATP-binding positions include glutamine 93, 111-115 (GEGKT), and aspartate 501. Residues cysteine 841, cysteine 843, cysteine 852, and cysteine 853 each contribute to the Zn(2+) site.

The protein belongs to the SecA family. In terms of assembly, monomer and homodimer. Part of the essential Sec protein translocation apparatus which comprises SecA, SecYEG and auxiliary proteins SecDF-YajC and YidC. The cofactor is Zn(2+).

The protein localises to the cell inner membrane. It is found in the cytoplasm. It catalyses the reaction ATP + H2O + cellular proteinSide 1 = ADP + phosphate + cellular proteinSide 2.. Part of the Sec protein translocase complex. Interacts with the SecYEG preprotein conducting channel. Has a central role in coupling the hydrolysis of ATP to the transfer of proteins into and across the cell membrane, serving as an ATP-driven molecular motor driving the stepwise translocation of polypeptide chains across the membrane. The sequence is that of Protein translocase subunit SecA from Helicobacter pylori (strain G27).